Here is a 224-residue protein sequence, read N- to C-terminus: MTSRDSAAAEITPEVLLRAYACGIFPMAESVDDPTLFWVEPELRGIIPLGGFRVASRLARTVRSDAFTVTVNRDFKGVIDGCAAPQPGRDDTWINRRIRELYIGLHGIGHCHSVEVWQDGDLAGGLYGVSLGRAFFGESMFHRARDASKVALVHLVARLLAGGYELLDTQFVTDHLRSFGAIEVPRQRYRSMLDDALQGIAAFDALPVDQPVTGAKALEIIAAH.

It belongs to the L/F-transferase family.

The protein localises to the cytoplasm. The catalysed reaction is N-terminal L-lysyl-[protein] + L-leucyl-tRNA(Leu) = N-terminal L-leucyl-L-lysyl-[protein] + tRNA(Leu) + H(+). It catalyses the reaction N-terminal L-arginyl-[protein] + L-leucyl-tRNA(Leu) = N-terminal L-leucyl-L-arginyl-[protein] + tRNA(Leu) + H(+). The enzyme catalyses L-phenylalanyl-tRNA(Phe) + an N-terminal L-alpha-aminoacyl-[protein] = an N-terminal L-phenylalanyl-L-alpha-aminoacyl-[protein] + tRNA(Phe). Functions in the N-end rule pathway of protein degradation where it conjugates Leu, Phe and, less efficiently, Met from aminoacyl-tRNAs to the N-termini of proteins containing an N-terminal arginine or lysine. This chain is Leucyl/phenylalanyl-tRNA--protein transferase, found in Rhodopseudomonas palustris (strain HaA2).